The following is a 280-amino-acid chain: Late embryogenesis abundant protein M17 (280 aa).

An N-terminal signal peptide occupies residues 1–22 (MGNLKSLVLLALLFSFSVAVFA). N-linked (GlcNAc...) asparagine glycosylation is present at N23. Tandem repeats lie at residues 76–97 (GGCR…CCRS) and 131–152 (GGCR…CCRS). Residues 76–262 (GGCRWGCCGG…RGRCRYCCRS (187 aa)) are 4 X 22 AA repeats, Cys-rich. Positions 163–184 (VEPNDVEPQQGGRGGGGGGGGG) are disordered. The span at 173–184 (GGRGGGGGGGGG) shows a compositional bias: gly residues. The stretch at 186–207 (GGCRWGCCGGWWRGRCRYCCRS) is repeat 3. Positions 218–239 (VEPNDVEPQQGGRGGGGGGGGG) are disordered. The span at 228-239 (GGRGGGGGGGGG) shows a compositional bias: gly residues. The stretch at 241–262 (GGCRWGCCGGWWRGRCRYCCRS) is repeat 4.

Its function is as follows. May be involved in the acquisition of desiccation tolerance during late phase of embryogenesis. The protein is Late embryogenesis abundant protein M17 of Arabidopsis thaliana (Mouse-ear cress).